The chain runs to 1299 residues: DNA-directed RNA polymerase subunit beta' (1299 aa).

Zn(2+) contacts are provided by cysteine 60, cysteine 62, cysteine 75, and cysteine 78. Residues 188–209 (GAKSDQKRRAKDGAEKEMGQTR) are disordered. Mg(2+) contacts are provided by aspartate 535, aspartate 537, and aspartate 539. Zn(2+)-binding residues include cysteine 882, cysteine 959, cysteine 966, and cysteine 969.

Belongs to the RNA polymerase beta' chain family. In terms of assembly, the RNAP catalytic core consists of 2 alpha, 1 beta, 1 beta' and 1 omega subunit. When a sigma factor is associated with the core the holoenzyme is formed, which can initiate transcription. Mg(2+) is required as a cofactor. The cofactor is Zn(2+).

It carries out the reaction RNA(n) + a ribonucleoside 5'-triphosphate = RNA(n+1) + diphosphate. In terms of biological role, DNA-dependent RNA polymerase catalyzes the transcription of DNA into RNA using the four ribonucleoside triphosphates as substrates. In Clavibacter sepedonicus (Clavibacter michiganensis subsp. sepedonicus), this protein is DNA-directed RNA polymerase subunit beta'.